The sequence spans 283 residues: Phosphatidylserine decarboxylase proenzyme (283 aa).

Catalysis depends on charge relay system; for autoendoproteolytic cleavage activity residues Asp-88, His-145, and Ser-248. The Schiff-base intermediate with substrate; via pyruvic acid; for decarboxylase activity role is filled by Ser-248. Ser-248 is subject to Pyruvic acid (Ser); by autocatalysis.

It belongs to the phosphatidylserine decarboxylase family. PSD-B subfamily. Prokaryotic type I sub-subfamily. As to quaternary structure, heterodimer of a large membrane-associated beta subunit and a small pyruvoyl-containing alpha subunit. Requires pyruvate as cofactor. In terms of processing, is synthesized initially as an inactive proenzyme. Formation of the active enzyme involves a self-maturation process in which the active site pyruvoyl group is generated from an internal serine residue via an autocatalytic post-translational modification. Two non-identical subunits are generated from the proenzyme in this reaction, and the pyruvate is formed at the N-terminus of the alpha chain, which is derived from the carboxyl end of the proenzyme. The autoendoproteolytic cleavage occurs by a canonical serine protease mechanism, in which the side chain hydroxyl group of the serine supplies its oxygen atom to form the C-terminus of the beta chain, while the remainder of the serine residue undergoes an oxidative deamination to produce ammonia and the pyruvoyl prosthetic group on the alpha chain. During this reaction, the Ser that is part of the protease active site of the proenzyme becomes the pyruvoyl prosthetic group, which constitutes an essential element of the active site of the mature decarboxylase.

The protein localises to the cell membrane. It carries out the reaction a 1,2-diacyl-sn-glycero-3-phospho-L-serine + H(+) = a 1,2-diacyl-sn-glycero-3-phosphoethanolamine + CO2. The protein operates within phospholipid metabolism; phosphatidylethanolamine biosynthesis; phosphatidylethanolamine from CDP-diacylglycerol: step 2/2. Functionally, catalyzes the formation of phosphatidylethanolamine (PtdEtn) from phosphatidylserine (PtdSer). This Methylibium petroleiphilum (strain ATCC BAA-1232 / LMG 22953 / PM1) protein is Phosphatidylserine decarboxylase proenzyme.